Reading from the N-terminus, the 387-residue chain is Limonene 1,2-monooxygenase (387 aa).

Belongs to the bacterial luciferase oxidoreductase family. The cofactor is FAD.

It carries out the reaction (4S)-limonene + NADPH + O2 + H(+) = limonene 1,2-epoxide + NADP(+) + H2O. It catalyses the reaction (4S)-limonene + NADH + O2 + H(+) = limonene 1,2-epoxide + NAD(+) + H2O. The catalysed reaction is (4R)-limonene + NADH + O2 + H(+) = limonene 1,2-epoxide + NAD(+) + H2O. The enzyme catalyses (4R)-limonene + NADPH + O2 + H(+) = limonene 1,2-epoxide + NADP(+) + H2O. It participates in terpene metabolism; (4R)-limonene degradation; (1S,4R)-1-hydroxylimonen-2-one from (4R)-limonene: step 1/3. In terms of biological role, acts on both enantiomers of limonene by their NAD-dependent epoxidation at the 1,2 double bond forming limonene-1,2-epoxide. This Rhodococcus erythropolis (Arthrobacter picolinophilus) protein is Limonene 1,2-monooxygenase (limB).